An 847-amino-acid polypeptide reads, in one-letter code: Putative disease resistance RPP13-like protein 2 (847 aa).

Residues 26-42 (GVKDDLEELKTELTCIQ) adopt a coiled-coil conformation. In terms of domain architecture, NB-ARC spans 142-446 (STSRVREVRR…AEGFIQEDEE (305 aa)). 191–198 (GMEGLGKT) provides a ligand contact to ATP. LRR repeat units lie at residues 587–610 (LVHL…ISNL), 612–634 (FLQT…NLTS), 703–726 (LKNL…TVRF), 749–774 (FPSL…KLQR), and 807–830 (IKRL…NLDN).

Belongs to the disease resistance NB-LRR family. RPP13 subfamily.

Functionally, potential disease resistance protein. This chain is Putative disease resistance RPP13-like protein 2 (RPP13L2), found in Arabidopsis thaliana (Mouse-ear cress).